We begin with the raw amino-acid sequence, 337 residues long: 5-formaminoimidazole-4-carboxamide-1-(beta)-D-ribofuranosyl 5'-monophosphate synthetase (337 aa).

5-amino-1-(5-phospho-beta-D-ribosyl)imidazole-4-carboxamide contacts are provided by His-9 and Ser-73. Residues 94–324 (KKIFEWEADQ…IGRRIAREIR (231 aa)) enclose the ATP-grasp domain. ATP contacts are provided by residues 124-184 (PEDV…VPMY) and Glu-206. Position 234 (Asn-234) interacts with 5-amino-1-(5-phospho-beta-D-ribosyl)imidazole-4-carboxamide. Positions 273 and 286 each coordinate Mg(2+).

It belongs to the phosphohexose mutase family. It depends on Mg(2+) as a cofactor. Mn(2+) serves as cofactor.

It catalyses the reaction 5-amino-1-(5-phospho-beta-D-ribosyl)imidazole-4-carboxamide + formate + ATP = 5-formamido-1-(5-phospho-D-ribosyl)imidazole-4-carboxamide + ADP + phosphate. It participates in purine metabolism; IMP biosynthesis via de novo pathway; 5-formamido-1-(5-phospho-D-ribosyl)imidazole-4-carboxamide from 5-amino-1-(5-phospho-D-ribosyl)imidazole-4-carboxamide (formate route): step 1/1. Functionally, catalyzes the ATP- and formate-dependent formylation of 5-aminoimidazole-4-carboxamide-1-beta-d-ribofuranosyl 5'-monophosphate (AICAR) to 5-formaminoimidazole-4-carboxamide-1-beta-d-ribofuranosyl 5'-monophosphate (FAICAR) in the absence of folates. This chain is 5-formaminoimidazole-4-carboxamide-1-(beta)-D-ribofuranosyl 5'-monophosphate synthetase, found in Saccharolobus solfataricus (strain ATCC 35092 / DSM 1617 / JCM 11322 / P2) (Sulfolobus solfataricus).